The sequence spans 309 residues: D-alanine--D-alanine ligase (309 aa).

An ATP-grasp domain is found at 104-301; it reads KQIWQGSDLP…FDALCVEILA (198 aa). Residue 130–185 participates in ATP binding; that stretch reads VASLGLPVIIKPVHEGSSIGMSKVEKIEDFAPAIEKATAHDAIVMAEKWITGREYT. Residues Asp-255, Glu-268, and Asn-270 each contribute to the Mg(2+) site.

The protein belongs to the D-alanine--D-alanine ligase family. The cofactor is Mg(2+). Mn(2+) is required as a cofactor.

The protein localises to the cytoplasm. The catalysed reaction is 2 D-alanine + ATP = D-alanyl-D-alanine + ADP + phosphate + H(+). The protein operates within cell wall biogenesis; peptidoglycan biosynthesis. Functionally, cell wall formation. The protein is D-alanine--D-alanine ligase of Acinetobacter baylyi (strain ATCC 33305 / BD413 / ADP1).